The chain runs to 572 residues: Proline--tRNA ligase (572 aa).

This sequence belongs to the class-II aminoacyl-tRNA synthetase family. ProS type 1 subfamily. Homodimer.

It is found in the cytoplasm. It catalyses the reaction tRNA(Pro) + L-proline + ATP = L-prolyl-tRNA(Pro) + AMP + diphosphate. Catalyzes the attachment of proline to tRNA(Pro) in a two-step reaction: proline is first activated by ATP to form Pro-AMP and then transferred to the acceptor end of tRNA(Pro). As ProRS can inadvertently accommodate and process non-cognate amino acids such as alanine and cysteine, to avoid such errors it has two additional distinct editing activities against alanine. One activity is designated as 'pretransfer' editing and involves the tRNA(Pro)-independent hydrolysis of activated Ala-AMP. The other activity is designated 'posttransfer' editing and involves deacylation of mischarged Ala-tRNA(Pro). The misacylated Cys-tRNA(Pro) is not edited by ProRS. This chain is Proline--tRNA ligase, found in Salmonella arizonae (strain ATCC BAA-731 / CDC346-86 / RSK2980).